A 564-amino-acid polypeptide reads, in one-letter code: Dihydroxy-acid dehydratase 2 (564 aa).

[2Fe-2S] cluster is bound at residue Cys-59. Residue Asp-91 participates in Mg(2+) binding. Residue Cys-132 participates in [2Fe-2S] cluster binding. Asp-133 and Lys-134 together coordinate Mg(2+). Position 134 is an N6-carboxylysine (Lys-134). Position 204 (Cys-204) interacts with [2Fe-2S] cluster. Glu-454 contacts Mg(2+). Ser-480 serves as the catalytic Proton acceptor.

It belongs to the IlvD/Edd family. Homodimer. [2Fe-2S] cluster serves as cofactor. Requires Mg(2+) as cofactor.

The catalysed reaction is (2R)-2,3-dihydroxy-3-methylbutanoate = 3-methyl-2-oxobutanoate + H2O. It catalyses the reaction (2R,3R)-2,3-dihydroxy-3-methylpentanoate = (S)-3-methyl-2-oxopentanoate + H2O. It participates in amino-acid biosynthesis; L-isoleucine biosynthesis; L-isoleucine from 2-oxobutanoate: step 3/4. Its pathway is amino-acid biosynthesis; L-valine biosynthesis; L-valine from pyruvate: step 3/4. Functionally, functions in the biosynthesis of branched-chain amino acids. Catalyzes the dehydration of (2R,3R)-2,3-dihydroxy-3-methylpentanoate (2,3-dihydroxy-3-methylvalerate) into 2-oxo-3-methylpentanoate (2-oxo-3-methylvalerate) and of (2R)-2,3-dihydroxy-3-methylbutanoate (2,3-dihydroxyisovalerate) into 2-oxo-3-methylbutanoate (2-oxoisovalerate), the penultimate precursor to L-isoleucine and L-valine, respectively. This Staphylococcus saprophyticus subsp. saprophyticus (strain ATCC 15305 / DSM 20229 / NCIMB 8711 / NCTC 7292 / S-41) protein is Dihydroxy-acid dehydratase 2.